Here is a 383-residue protein sequence, read N- to C-terminus: Protein arginine N-methyltransferase PRMT10 (383 aa).

A disordered region spans residues 1–23; sequence MRSSQNGGAMGGRAAGTGGGGPS. Residues 8-22 are compositionally biased toward gly residues; sequence GAMGGRAAGTGGGGP. Positions 29–360 constitute an SAM-dependent MTase PRMT-type domain; sequence EVDYAQYFCT…KENHRLMEIE (332 aa). S-adenosyl-L-methionine is bound by residues Gln-45, Arg-54, Gly-78, Glu-100, and Glu-129. Residues Glu-143 and Glu-152 contribute to the active site. Residues 190–230 are dimerization arm; that stretch reads DRKRNDFDGAMADWHNFSDEIKSYYGVDMGVLTKPFAEEQE.

The protein belongs to the class I-like SAM-binding methyltransferase superfamily. Protein arginine N-methyltransferase family. In terms of assembly, ring-like homodimer.

It catalyses the reaction L-arginyl-[protein] + 2 S-adenosyl-L-methionine = N(omega),N(omega)-dimethyl-L-arginyl-[protein] + 2 S-adenosyl-L-homocysteine + 2 H(+). Functionally, methylates (mono and asymmetric dimethylation) the guanidino nitrogens of arginyl residues in some proteins. Essential for regulating flowering time. The polypeptide is Protein arginine N-methyltransferase PRMT10 (PRMT10) (Arabidopsis thaliana (Mouse-ear cress)).